The following is a 196-amino-acid chain: Probable malonic semialdehyde reductase RutE (196 aa).

This sequence belongs to the nitroreductase family. HadB/RutE subfamily. It depends on FMN as a cofactor.

The catalysed reaction is 3-hydroxypropanoate + NADP(+) = 3-oxopropanoate + NADPH + H(+). In terms of biological role, may reduce toxic product malonic semialdehyde to 3-hydroxypropionic acid, which is excreted. The protein is Probable malonic semialdehyde reductase RutE of Cronobacter sakazakii (strain ATCC BAA-894) (Enterobacter sakazakii).